Reading from the N-terminus, the 520-residue chain is 1,4-alpha-glucan branching enzyme TTHA1902 (520 aa).

Glu184 serves as the catalytic Nucleophile. Substrate is bound by residues Arg265 and Gly282. Asp353 acts as the Proton donor in catalysis. Substrate is bound by residues Trp404, Asp460, and Gln469.

It belongs to the glycosyl hydrolase 57 family.

The enzyme catalyses Transfers a segment of a (1-&gt;4)-alpha-D-glucan chain to a primary hydroxy group in a similar glucan chain.. The protein operates within glycan biosynthesis; glycogen biosynthesis. Catalyzes the formation of branch points in alpha-glucans by cleavage of an alpha-1,4 glycosidic bond and subsequent transfer of the cleaved-off oligosaccharide to a new alpha-1,6 position. The branch chain-length distribution of the reaction products shows degree of polymerization (DP) of 3 to 13, with two local maxima at DP 7 and DP 11. Exhibits an alpha-retaining catalytic mechanism. Is involved in glycogen biosynthesis. Shows a secondary activity, i.e. the hydrolysis of the substrate, being 4% of the total activity. Can use amylose as substrate but not alpha-1,4-linked oligosaccharides of 2-7 glucose residues, beta-cyclodextrin, 6-O-glucosyl-beta-cyclodextrin and 6-O-maltosyl-beta-cyclodextrin. Is not able to branch amylopectin further, it only hydrolyzes amylopectin. Thus, displays preference for linear and long substrates (amylose) over branched structures (amylopectin). The sequence is that of 1,4-alpha-glucan branching enzyme TTHA1902 from Thermus thermophilus (strain ATCC 27634 / DSM 579 / HB8).